A 214-amino-acid polypeptide reads, in one-letter code: Ribosomal RNA small subunit methyltransferase G (214 aa).

Residues glycine 78, leucine 83, 129-130, and arginine 144 each bind S-adenosyl-L-methionine; that span reads AE.

The protein belongs to the methyltransferase superfamily. RNA methyltransferase RsmG family.

It is found in the cytoplasm. The enzyme catalyses guanosine(527) in 16S rRNA + S-adenosyl-L-methionine = N(7)-methylguanosine(527) in 16S rRNA + S-adenosyl-L-homocysteine. Functionally, specifically methylates the N7 position of guanine in position 527 of 16S rRNA. In Marinobacter nauticus (strain ATCC 700491 / DSM 11845 / VT8) (Marinobacter aquaeolei), this protein is Ribosomal RNA small subunit methyltransferase G.